We begin with the raw amino-acid sequence, 328 residues long: GMP reductase (328 aa).

The active-site Thioimidate intermediate is Cys176. 205 to 228 (IIADGGIRTHGDIAKSIRFGASMI) is an NADP(+) binding site.

It belongs to the IMPDH/GMPR family. GuaC type 2 subfamily.

The enzyme catalyses IMP + NH4(+) + NADP(+) = GMP + NADPH + 2 H(+). Its function is as follows. Catalyzes the irreversible NADPH-dependent deamination of GMP to IMP. It functions in the conversion of nucleobase, nucleoside and nucleotide derivatives of G to A nucleotides, and in maintaining the intracellular balance of A and G nucleotides. This is GMP reductase from Streptococcus pneumoniae (strain CGSP14).